We begin with the raw amino-acid sequence, 1036 residues long: MFGRSRSWVGGGHSKSSRNIHSLDHLKYLYHVLTKNTTVTEQNRNLLVETIRSITEILIWGDQNDSSVFDFFLEKNMFVFFLNILRQKSGRYVCVQLLQTLNILFENISHETSLYYLLSNNYVNSIIVHKFDFSDEEIMAYYISFLKTLSLKLNNHTVHFFYNEHTNDFALYTEAIKFFNHPESMVRIAVRTITLNVYKVSLDNQAMLHYIRDKTAVPYFSNLVWFIGSHVIELDNCVQTDEEHRNRGKLSDLVAEHLDHLHYLNDILIINCEFLNDVLTDHLLNRLFLPLYVYSLENPDKGGERPKISLPVSLYLLSQVFLIIHHAPLVNSLAEVILNGDLSETYTKPAQDVPRSSAKPSIRCFIKPTETLERSLEMNKHKGKKRMQKRPNYKNVGEEEDEERGSAEDAQEDAEKTKEIEMVIMKLGKLSEVAAAGTSVQEQNTTDEEKSAATNSENAQWSRPFLDMVYHALDSPDDDYHALFVLCLLYAMSHNKGMDPEKLKRIQLPVPSEAEKTTYNHLLAERLIRIMNNAAQPDGRIRLATLELSCLLLKQQVLTSSGCVIKDVHLACLEGAREESVHLVRHFYKGEEIFLDMFEDEYRSMTIKPMNVEYLMMDASILLPPTGTPLTGIDFVKRLPCGDVEKTRRAIRVFFMLRSLSLQLRGEPETQLPLTREEDLIKTDDVLDLNNSDLIACTVITKDGGMVQRFLAVDIYQMSLVEPDVSRLGWGVVKFAGLLQDMQVTGVEDDSRALNITIHKPASSPHSKPFPILQATFVFSDHIRCIIAKQRLAKGRIQARRMKMQRIAALLDLPIQPTTEVLGFGLCSSSSSSQHLPFRFYEQCRRGSSDPTVQRSVFASVDKVPGFAVAQCINQHSSPSLSSPSPPFASGSPGGSGSTSHCDSGGSSSAPSATQSPADAPTTPEQPQPHLDQSVIGNEMDVNSKPSKNSSARSSEGETMHLSPSLLPAQQPTISLLYEDTADTLSVESLTIVPPVDPHSLRALSGISQLPTLPAADTETPAEGAVNPEPAEPTEH.

An FPL domain is found at 51–198 (IRSITEILIW…AVRTITLNVY (148 aa)). Disordered stretches follow at residues 375 to 416 (SLEM…DAEK), 437 to 458 (GTSV…NSEN), 876 to 967 (HSSP…PSLL), and 1008 to 1036 (SQLP…PTEH). Over residues 381-392 (HKGKKRMQKRPN) the composition is skewed to basic residues. Composition is skewed to low complexity over residues 877–891 (SSPS…FASG), 898–923 (STSH…APTT), and 943–954 (NSKPSKNSSARS).

The protein belongs to the CLEC16A/gop-1 family. Interacts with RNF41/NRDP1. Ubiquitously expressed. Expressed in pancreatic islets.

The protein resides in the endosome membrane. It is found in the lysosome membrane. Functionally, regulator of mitophagy through the upstream regulation of the RNF41/NRDP1-PRKN pathway. Mitophagy is a selective form of autophagy necessary for mitochondrial quality control. The RNF41/NRDP1-PRKN pathway regulates autophagosome-lysosome fusion during late mitophagy. May protect RNF41/NRDP1 from proteasomal degradation, RNF41/NRDP1 which regulates proteasomal degradation of PRKN. Plays a key role in beta cells functions by regulating mitophagy/autophagy and mitochondrial health. This Mus musculus (Mouse) protein is Protein CLEC16A.